A 64-amino-acid polypeptide reads, in one-letter code: MASKKGVRLIITLECTECRSNPDKRSAGVSRYTTSKNRRNTTGRLELKKFCTHCNKHTVHKEIK.

This sequence belongs to the bacterial ribosomal protein bL33 family.

This Gloeothece citriformis (strain PCC 7424) (Cyanothece sp. (strain PCC 7424)) protein is Large ribosomal subunit protein bL33.